A 205-amino-acid chain; its full sequence is Outer-membrane lipoprotein carrier protein (205 aa).

A signal peptide spans 1-19; it reads MKKIIICFIFVFSINVSFA.

Belongs to the LolA family. In terms of assembly, monomer.

It localises to the periplasm. Participates in the translocation of lipoproteins from the inner membrane to the outer membrane. Only forms a complex with a lipoprotein if the residue after the N-terminal Cys is not an aspartate (The Asp acts as a targeting signal to indicate that the lipoprotein should stay in the inner membrane). The polypeptide is Outer-membrane lipoprotein carrier protein (Francisella tularensis subsp. tularensis (strain FSC 198)).